The primary structure comprises 305 residues: Ribosomal RNA small subunit methyltransferase H (305 aa).

S-adenosyl-L-methionine is bound by residues Gly-30 to His-32, Asp-49, Phe-74, Asp-96, and Gln-103.

It belongs to the methyltransferase superfamily. RsmH family.

Its subcellular location is the cytoplasm. The catalysed reaction is cytidine(1402) in 16S rRNA + S-adenosyl-L-methionine = N(4)-methylcytidine(1402) in 16S rRNA + S-adenosyl-L-homocysteine + H(+). Its function is as follows. Specifically methylates the N4 position of cytidine in position 1402 (C1402) of 16S rRNA. This Francisella tularensis subsp. tularensis (strain FSC 198) protein is Ribosomal RNA small subunit methyltransferase H.